The primary structure comprises 138 residues: Cysteine desulfuration protein SufE (138 aa).

C51 (cysteine persulfide intermediate) is an active-site residue.

It belongs to the SufE family. Homodimer. Interacts with SufS.

The protein localises to the cytoplasm. The protein operates within cofactor biosynthesis; iron-sulfur cluster biosynthesis. In terms of biological role, participates in cysteine desulfuration mediated by SufS. Cysteine desulfuration mobilizes sulfur from L-cysteine to yield L-alanine and constitutes an essential step in sulfur metabolism for biosynthesis of a variety of sulfur-containing biomolecules. Functions as a sulfur acceptor for SufS, by mediating the direct transfer of the sulfur atom from the S-sulfanylcysteine of SufS, an intermediate product of cysteine desulfuration process. The chain is Cysteine desulfuration protein SufE from Escherichia coli O45:K1 (strain S88 / ExPEC).